A 174-amino-acid chain; its full sequence is Co-chaperone protein HscB homolog (174 aa).

Residues 2 to 74 enclose the J domain; sequence NYFELFSLLP…IQRAEHLLTL (73 aa).

Belongs to the HscB family. In terms of assembly, interacts with HscA and stimulates its ATPase activity.

Functionally, co-chaperone involved in the maturation of iron-sulfur cluster-containing proteins. Seems to help targeting proteins to be folded toward HscA. The chain is Co-chaperone protein HscB homolog from Shewanella halifaxensis (strain HAW-EB4).